A 538-amino-acid chain; its full sequence is RNA-binding protein RO60 (538 aa).

Residues 16–369 enclose the TROVE domain; sequence VPNSEGCYVW…SFKLVEPTGK (354 aa). The RNA-binding stretch occupies residues 120-284; it reads RIPTHLFTFI…DMPLTALLRN (165 aa). The tract at residues 361–538 is VWFA-like domain; the sequence is FKLVEPTGKR…VIRNFTLDLI (178 aa). A divalent metal cation contacts are provided by S378, S380, and T445.

This sequence belongs to the Ro 60 kDa family.

It localises to the cytoplasm. In terms of biological role, RNA-binding protein that binds to misfolded non-coding RNAs, pre-5S rRNA, and several small cytoplasmic RNA molecules known as Y RNAs. May play roles in cilia formation and/or maintenance. The polypeptide is RNA-binding protein RO60 (Xenopus laevis (African clawed frog)).